Reading from the N-terminus, the 198-residue chain is Probable chorismate pyruvate-lyase (198 aa).

3 residues coordinate substrate: R73, L111, and E172.

The protein belongs to the UbiC family.

The protein localises to the cytoplasm. It carries out the reaction chorismate = 4-hydroxybenzoate + pyruvate. It functions in the pathway cofactor biosynthesis; ubiquinone biosynthesis. Removes the pyruvyl group from chorismate, with concomitant aromatization of the ring, to provide 4-hydroxybenzoate (4HB) for the ubiquinone pathway. The polypeptide is Probable chorismate pyruvate-lyase (Burkholderia lata (strain ATCC 17760 / DSM 23089 / LMG 22485 / NCIMB 9086 / R18194 / 383)).